A 326-amino-acid chain; its full sequence is D-amino-acid oxidase (326 aa).

Glycine 14, valine 15, isoleucine 16, aspartate 36, serine 44, alanine 48, alanine 49, isoleucine 50, and valine 157 together coordinate FAD. Residues tyrosine 219 and arginine 274 each contribute to the D-proline site. The D-serine site is built by tyrosine 219 and arginine 274. The FAD site is built by arginine 274, glycine 299, glycine 300, glycine 302, and threonine 304. Glycine 300 serves as a coordination point for D-proline. Glycine 300 contributes to the D-serine binding site.

Belongs to the DAMOX/DASOX family. In terms of assembly, homodimer. Requires FAD as cofactor.

It is found in the cytoplasm. It localises to the secreted. The protein localises to the cell wall. It catalyses the reaction a D-alpha-amino acid + O2 + H2O = a 2-oxocarboxylate + H2O2 + NH4(+). It carries out the reaction D-phenylalanine + O2 + H2O = 3-phenylpyruvate + H2O2 + NH4(+). The enzyme catalyses D-lysine + O2 + H2O = 6-amino-2-oxohexanoate + H2O2 + NH4(+). The catalysed reaction is D-methionine + O2 + H2O = 4-methylsulfanyl-2-oxobutanoate + H2O2 + NH4(+). It catalyses the reaction D-arginine + O2 + H2O = 5-guanidino-2-oxopentanoate + H2O2 + NH4(+). It carries out the reaction D-ornithine + O2 + H2O = 5-amino-2-oxopentanoate + H2O2 + NH4(+). The enzyme catalyses D-leucine + O2 + H2O = 4-methyl-2-oxopentanoate + H2O2 + NH4(+). The catalysed reaction is D-alanine + O2 + H2O = pyruvate + H2O2 + NH4(+). It catalyses the reaction D-valine + O2 + H2O = 3-methyl-2-oxobutanoate + H2O2 + NH4(+). It carries out the reaction D-histidine + O2 + H2O = 3-(imidazol-5-yl)pyruvate + H2O2 + NH4(+). Functionally, catalyzes the oxidative deamination of D-amino acids with broad substrate specificity. The sequence is that of D-amino-acid oxidase from Glutamicibacter protophormiae (Brevibacterium protophormiae).